We begin with the raw amino-acid sequence, 151 residues long: uncharacterized protein (151 aa).

This is an uncharacterized protein from Saccharomyces cerevisiae (strain ATCC 204508 / S288c) (Baker's yeast).